Here is a 707-residue protein sequence, read N- to C-terminus: Protein kinase C theta type (707 aa).

The C2 domain maps to 1–107 (MSPFLRIGLS…KNNGRTEIWL (107 aa)). A Phosphotyrosine; by LCK modification is found at Y90. The Phorbol-ester/DAG-type 1 zinc finger occupies 159–209 (CHEFTATFFPQPTFCSVCHEFVWGLNKQGYQCRRCNAAIHKKCIDKVIAKC). Position 219 is a phosphothreonine; by autocatalysis (T219). The segment at 231–281 (PHRFKVYNYKSPTFCEHCGTLLWGLARQGLKCDACGMNVHHRCQTKVANLC) adopts a Phorbol-ester/DAG-type 2 zinc-finger fold. The residue at position 348 (S348) is a Phosphoserine. The 255-residue stretch at 380–634 (FILHKMLGKG…RGDIRQHPLF (255 aa)) folds into the Protein kinase domain. ATP-binding positions include 386–394 (LGKGSFGKV) and K409. D504 (proton acceptor) is an active-site residue. Phosphothreonine; by PDPK1 is present on T538. The region spanning 635–706 (REINWEELER…INPGMETLIC (72 aa)) is the AGC-kinase C-terminal domain. 2 positions are modified to phosphoserine: S676 and S685. At S695 the chain carries Phosphoserine; by autocatalysis.

This sequence belongs to the protein kinase superfamily. AGC Ser/Thr protein kinase family. PKC subfamily. In terms of assembly, part of a membrane raft complex composed at least of BCL10, CARD11, MALT1 and IKBKB. Interacts with GLRX3 (via N-terminus). Interacts with ECT2. Interacts with CCDC88A/GIV; the interaction leads to phosphorylation of CCDC88A and inhibition of its guanine nucleotide exchange factor activity. Interacts with CD28. The cofactor is Mg(2+). In terms of processing, autophosphorylation at Thr-219 is required for targeting to the TCR and cellular function of PRKCQ upon antigen receptor ligation. Following TCR stimulation, phosphorylated at Tyr-90 and Ser-685.

Its subcellular location is the cytoplasm. The protein resides in the cell membrane. The enzyme catalyses L-seryl-[protein] + ATP = O-phospho-L-seryl-[protein] + ADP + H(+). It carries out the reaction L-threonyl-[protein] + ATP = O-phospho-L-threonyl-[protein] + ADP + H(+). Novel PKCs (PRKCD, PRKCE, PRKCH and PRKCQ) are calcium-insensitive, but activated by diacylglycerol (DAG) and phosphatidylserine. Three specific sites; Thr-538 (activation loop of the kinase domain), Ser-676 (turn motif) and Ser-695 (hydrophobic region), need to be phosphorylated for its full activation. Its function is as follows. Calcium-independent, phospholipid- and diacylglycerol (DAG)-dependent serine/threonine-protein kinase that mediates non-redundant functions in T-cell receptor (TCR) signaling, including T-cells activation, proliferation, differentiation and survival, by mediating activation of multiple transcription factors such as NF-kappa-B, JUN, NFATC1 and NFATC2. In TCR-CD3/CD28-co-stimulated T-cells, is required for the activation of NF-kappa-B and JUN, which in turn are essential for IL2 production, and participates in the calcium-dependent NFATC1 and NFATC2 transactivation. Mediates the activation of the canonical NF-kappa-B pathway (NFKB1) by direct phosphorylation of CARD11 on several serine residues, inducing CARD11 association with lipid rafts and recruitment of the BCL10-MALT1 complex, which then activates IKK complex, resulting in nuclear translocation and activation of NFKB1. May also play an indirect role in activation of the non-canonical NF-kappa-B (NFKB2) pathway. In the signaling pathway leading to JUN activation, acts by phosphorylating the mediator STK39/SPAK and may not act through MAP kinases signaling. Plays a critical role in TCR/CD28-induced NFATC1 and NFATC2 transactivation by participating in the regulation of reduced inositol 1,4,5-trisphosphate generation and intracellular calcium mobilization. After costimulation of T-cells through CD28 can phosphorylate CBLB and is required for the ubiquitination and subsequent degradation of CBLB, which is a prerequisite for the activation of TCR. During T-cells differentiation, plays an important role in the development of T-helper 2 (Th2) cells following immune and inflammatory responses, and, in the development of inflammatory autoimmune diseases, is necessary for the activation of IL17-producing Th17 cells. May play a minor role in Th1 response. Upon TCR stimulation, mediates T-cell protective survival signal by phosphorylating BAD, thus protecting T-cells from BAD-induced apoptosis, and by up-regulating BCL-X(L)/BCL2L1 levels through NF-kappa-B and JUN pathways. In platelets, regulates signal transduction downstream of the ITGA2B, CD36/GP4, F2R/PAR1 and F2RL3/PAR4 receptors, playing a positive role in 'outside-in' signaling and granule secretion signal transduction. May relay signals from the activated ITGA2B receptor by regulating the uncoupling of WASP and WIPF1, thereby permitting the regulation of actin filament nucleation and branching activity of the Arp2/3 complex. May mediate inhibitory effects of free fatty acids on insulin signaling by phosphorylating IRS1, which in turn blocks IRS1 tyrosine phosphorylation and downstream activation of the PI3K/AKT pathway. Phosphorylates MSN (moesin) in the presence of phosphatidylglycerol or phosphatidylinositol. Phosphorylates PDPK1 at 'Ser-504' and 'Ser-532' and negatively regulates its ability to phosphorylate PKB/AKT1. Phosphorylates CCDC88A/GIV and inhibits its guanine nucleotide exchange factor activity. Phosphorylates and activates LRRK1, which phosphorylates RAB proteins involved in intracellular trafficking. The polypeptide is Protein kinase C theta type (Prkcq) (Rattus norvegicus (Rat)).